A 114-amino-acid chain; its full sequence is UPF0342 protein SH1117 (114 aa).

The protein belongs to the UPF0342 family.

In Staphylococcus haemolyticus (strain JCSC1435), this protein is UPF0342 protein SH1117.